A 255-amino-acid chain; its full sequence is 5-oxoprolinase subunit A (255 aa).

The protein belongs to the LamB/PxpA family. Forms a complex composed of PxpA, PxpB and PxpC.

The catalysed reaction is 5-oxo-L-proline + ATP + 2 H2O = L-glutamate + ADP + phosphate + H(+). In terms of biological role, catalyzes the cleavage of 5-oxoproline to form L-glutamate coupled to the hydrolysis of ATP to ADP and inorganic phosphate. In Thermococcus onnurineus (strain NA1), this protein is 5-oxoprolinase subunit A.